Here is a 172-residue protein sequence, read N- to C-terminus: Adenine phosphoribosyltransferase (172 aa).

The protein belongs to the purine/pyrimidine phosphoribosyltransferase family. As to quaternary structure, homodimer.

The protein localises to the cytoplasm. It catalyses the reaction AMP + diphosphate = 5-phospho-alpha-D-ribose 1-diphosphate + adenine. It functions in the pathway purine metabolism; AMP biosynthesis via salvage pathway; AMP from adenine: step 1/1. Its function is as follows. Catalyzes a salvage reaction resulting in the formation of AMP, that is energically less costly than de novo synthesis. This chain is Adenine phosphoribosyltransferase, found in Parasynechococcus marenigrum (strain WH8102).